A 113-amino-acid polypeptide reads, in one-letter code: Class I hydrophobin POH1 (113 aa).

An N-terminal signal peptide occupies residues 1–26 (MFSIRISTVVLAASALLAVAIPMTNT). 4 disulfides stabilise this stretch: Cys-31-Cys-93, Cys-38-Cys-87, Cys-39-Cys-74, and Cys-94-Cys-107.

It belongs to the fungal hydrophobin family. As to quaternary structure, self-assembles to form functional amyloid fibrils called rodlets. Self-assembly into fibrillar rodlets occurs spontaneously at hydrophobic:hydrophilic interfaces and the rodlets further associate laterally to form amphipathic monolayers. Expressed in the fruiting bodies but not in vegetative mycelium.

Its subcellular location is the secreted. It localises to the cell wall. Functionally, aerial growth, conidiation, and dispersal of filamentous fungi in the environment rely upon a capability of their secreting small amphipathic proteins called hydrophobins (HPBs) with low sequence identity. Class I can self-assemble into an outermost layer of rodlet bundles on aerial cell surfaces, conferring cellular hydrophobicity that supports fungal growth, development and dispersal; whereas Class II form highly ordered films at water-air interfaces through intermolecular interactions but contribute nothing to the rodlet structure. POH1 is a class I hydrophobin that is involved in the formation of mycelium knots and subsequent fruiting bodies. This chain is Class I hydrophobin POH1, found in Pleurotus ostreatus (Oyster mushroom).